A 278-amino-acid polypeptide reads, in one-letter code: Transmembrane protein 45B (278 aa).

7 consecutive transmembrane segments (helical) span residues 7–27 (HALPGSFFLIVGLWWSVKYPL), 49–69 (IIEGAVKTLFAIIGILAEQFV), 95–115 (YLFFGVSGLMDMITYLYFHIV), 117–137 (LGLDRVVLAMAVFIEGFLFYF), 149–169 (IHSLLLFGLFGAAVSISLEVI), 183–203 (LLILQGTWFWQIGFVLFPPFG), and 215–235 (IMFITMCFCWHYLVALCIVAI). Residues serine 273 and serine 275 each carry the phosphoserine modification.

Belongs to the TMEM45 family.

Its subcellular location is the endosome membrane. The protein localises to the lysosome membrane. It is found in the golgi apparatus. The protein resides in the trans-Golgi network membrane. Its function is as follows. Plays a role in innate immunity. The protein is Transmembrane protein 45B (Tmem45b) of Mus musculus (Mouse).